Reading from the N-terminus, the 610-residue chain is Fimbrin (610 aa).

2 EF-hand domains span residues 7-42 and 43-78; these read SEISEFKASFNQFDENGDGQISALELQKILTKCGEK and VTGVEVRDMIKEVDTDGNGSIDFKEFLQVMQKARQH. Positions 20, 22, 24, 26, 31, 56, 58, 60, 62, and 67 each coordinate Ca(2+). Actin-binding stretches follow at residues 102 to 365 and 366 to 608; these read YSGS…NTHP and ALEP…QVEM. Calponin-homology (CH) domains lie at 116 to 232, 260 to 365, 379 to 488, and 501 to 608; these read DEEK…KIGL, LPVE…NTHP, TREE…RGHV, and PIAD…QVEM.

Functionally, binds to actin. The sequence is that of Fimbrin (fimA) from Dictyostelium discoideum (Social amoeba).